Here is a 534-residue protein sequence, read N- to C-terminus: Kelch repeat and BTB domain-containing protein 4 (534 aa).

Residues 61–128 form the BTB domain; sequence ADVTISVEGR…IYHGTVKLRA (68 aa). The BACK domain maps to 163–255; the sequence is CLQVMWLADR…SLKEIGENVH (93 aa). Kelch repeat units lie at residues 255-301, 302-344, 347-394, 396-446, and 448-497; these read HIYL…KHGG, DLYV…SVPG, AIYS…NLNG, IYLL…VHKD, and VFIV…VFRD.

In terms of assembly, component of the BCR(KBTBD4) E3 ubiquitin ligase complex, at least composed of CUL3, KBTBD4 and RBX1.

Its function is as follows. Substrate-specific adapter of a BCR (BTB-CUL3-RBX1) E3 ubiquitin ligase complex which targets CoREST corepressor complex components RCOR1, KDM1A/LSD1 and HDAC2 for proteasomal degradation. RCOR1 is likely to be the primary target while degradation of KDM1A and HDAC2 is likely due to their association with RCOR1. Also targets RCOR3, MIER2 and MIER3 for proteasomal degradation as well as associated proteins ZNF217 and RREB1. Degradation is dependent on the presence of an ELM2 domain in the target proteins. The polypeptide is Kelch repeat and BTB domain-containing protein 4 (Kbtbd4) (Mus musculus (Mouse)).